A 213-amino-acid chain; its full sequence is Large ribosomal subunit protein uL3 (213 aa).

Residues 131-155 (GRASHGNSVSHRAHGSTGNNQDPGR) form a disordered region. Positions 135 to 152 (HGNSVSHRAHGSTGNNQD) are enriched in polar residues. Q151 is modified (N5-methylglutamine).

This sequence belongs to the universal ribosomal protein uL3 family. In terms of assembly, part of the 50S ribosomal subunit. Forms a cluster with proteins L14 and L19. Methylated by PrmB.

Its function is as follows. One of the primary rRNA binding proteins, it binds directly near the 3'-end of the 23S rRNA, where it nucleates assembly of the 50S subunit. This Agrobacterium fabrum (strain C58 / ATCC 33970) (Agrobacterium tumefaciens (strain C58)) protein is Large ribosomal subunit protein uL3.